A 76-amino-acid polypeptide reads, in one-letter code: MSKAHPPEVKKYMDKRMMLKLNGGRAVTGILRGFDPFMNVVLDDTVEECKDNTKNNIGMVVIRGNSIVMVEALDRV.

Positions A4–V76 constitute a Sm domain.

Belongs to the snRNP Sm proteins family. Interacts with the SMN complex. Core component of the spliceosomal U1, U2, U4 and U5 small nuclear ribonucleoproteins (snRNPs), the building blocks of the spliceosome. Most spliceosomal snRNPs contain a common set of Sm proteins, SNRPB, SNRPD1, SNRPD2, SNRPD3, SNRPE, SNRPF and SNRPG that assemble in a heptameric protein ring on the Sm site of the small nuclear RNA to form the core snRNP. Component of the U1 snRNP. Component of the U4/U6-U5 tri-snRNP complex. Component of the U7 snRNP complex. Component of the U11/U12 snRNPs that are part of the U12-type spliceosome.

Its subcellular location is the cytoplasm. The protein localises to the cytosol. The protein resides in the nucleus. Plays a role in pre-mRNA splicing as a core component of the spliceosomal U1, U2, U4 and U5 small nuclear ribonucleoproteins (snRNPs), the building blocks of the spliceosome. Component of both the pre-catalytic spliceosome B complex and activated spliceosome C complexes. Is also a component of the minor U12 spliceosome. This Drosophila melanogaster (Fruit fly) protein is Probable small nuclear ribonucleoprotein G.